We begin with the raw amino-acid sequence, 982 residues long: MEELSKQPPPPPLTQPPPPSSSVSIEEPLPNGKGGGAVVVNSIAKLPEEELLGSVTMHNCPGTRASARVIQKMKQDQTRPMTPPPSEREPNKKEEKAAQKTPSQLKTGSGKTTWTNVERNCFFDALNEFGKDFEAVANCINAKLKRRNANSDYSFKTKDQVRQHYYQTHHKICKYVRFSEELKKPAQELYTLINYGEMRRKLQFLTEKHFMKLKQLVYQGQITVRCKGKNIRIKTPSCKALRRLNQLDDSLEDIRLPSKVEVLVTPANMEAFGRVQSLAQNPRGRIIVPLHKKLISFIKTFEYKWRSANQRLHEEKSAYFSSSLPSAASNNNNNNNETEPLQPSVASLDPSMCFQPRPGVAIHRPLLSITAYLSSISICLTAYEERMGFKVRSETLGNLAGMSVAANKRLRTESGSEKRSPETKKPKSSASPPLEKSLDDGPLEGNLMKMENSSGDELGEEIHEFLGDILEAMQHPQAATIPALSATTGDTTNVAVALETSHDPVQQAYPANADLSNAMATSVLQTSCAAAPAPSTPVTGSLAAPSVARSKRKEAKEAAAAAQARNFKPLLSDDILKRIRKGWTQANAADITIGDLYVVFGQDSKLELEYYWCEVDSSTAMASSILTINTVTPSSSSVGTQTGSAASNANQTGASSNCYVSASSNSSTSSTSLPYNPNDCDSVERVRAVTTSSVSNKLKHLLLVANLSERVRKRQCNCGHTCDRKRDLMTKAQQLAEATATGGVGGMVEGNFRTPMLPVRRPISNIDPVRQLSALTRQKISRQVLVQRRLLPPTSAGDRPYDLLSVRQLHSGLFEPIDRVDGTSSAGISTSGSKPDCSMNAMTASQDQEPGDQGALEFLNDEATQVSARDMPNLDICVATNRTDVSSSLNEAAQDGSTTQSFFQGSMSPMHLLRDSTSNARWLEDNINDFSLTSLLGHLDEIDATRDILDPSSSMSVISESSVDFRHKFQEIAALLQQQEKD.

Disordered stretches follow at residues 1-37 (MEEL…GGGA), 71-111 (QKMK…GSGK), 323-349 (SLPS…ASLD), 407-456 (NKRL…SSGD), and 822-851 (GTSS…QEPG). The span at 7–20 (QPPPPPLTQPPPPS) shows a compositional bias: pro residues. Residues 21 to 30 (SSVSIEEPLP) show a composition bias toward low complexity. Residues 86–98 (SEREPNKKEEKAA) show a composition bias toward basic and acidic residues. The segment covering 100–111 (KTPSQLKTGSGK) has biased composition (polar residues). The SANT domain maps to 109 to 173 (SGKTTWTNVE…HYYQTHHKIC (65 aa)). Residues 410–425 (LRTESGSEKRSPETKK) are compositionally biased toward basic and acidic residues. Phosphoserine is present on residues Ser431 and Ser437. Residues 822–833 (GTSSAGISTSGS) are compositionally biased toward low complexity.

This sequence belongs to the cramped family. Ubiquitously expressed throughout embryonic development. High expression is detected in CNS and gonads.

Its subcellular location is the nucleus. Functionally, polycomb group (Pc-G) genes are needed to maintain expression patterns of the homeotic selector genes of the Antennapedia (Antp-C) and Bithorax (Bx-C) complexes, and hence for the maintenance of segmental determination. Can act as a modifier of position effect variegation (PEV). The protein is Protein cramped (crm) of Drosophila melanogaster (Fruit fly).